We begin with the raw amino-acid sequence, 197 residues long: MSSLLEQLIEAFRVLPGVGQKSAQRMAYHVLEREREGGRRLAAALANAVEKVGHCVQCRDFTESEVCAICANSGRDRQQLCVVESPADRLAIEHATGYRGVYFILQGRLSPLDGIGPRELGLDRLAERLAAGEVTEMIIATNATVEGEATAHYLAQLARQHSVRPSRLAQGMPLGGELEYVDRGTLSHAFGTRSEVL.

The C4-type zinc finger occupies 55–70; that stretch reads CVQCRDFTESEVCAIC. Residues 78 to 173 form the Toprim domain; the sequence is QQLCVVESPA…RPSRLAQGMP (96 aa).

This sequence belongs to the RecR family.

May play a role in DNA repair. It seems to be involved in an RecBC-independent recombinational process of DNA repair. It may act with RecF and RecO. The sequence is that of Recombination protein RecR from Xanthomonas campestris pv. campestris (strain 8004).